A 154-amino-acid polypeptide reads, in one-letter code: Transcriptional repressor NrdR (154 aa).

A zinc finger lies at 3 to 34; that stretch reads CPFCGANDTKVIDSRLVAEGEQVRRRRECVAC. One can recognise an ATP-cone domain in the interval 49-139; that stretch reads PRLIKQDGTR…VYRRFQDLDE (91 aa).

The protein belongs to the NrdR family. It depends on Zn(2+) as a cofactor.

Its function is as follows. Negatively regulates transcription of bacterial ribonucleotide reductase nrd genes and operons by binding to NrdR-boxes. The sequence is that of Transcriptional repressor NrdR from Pseudomonas putida (strain ATCC 700007 / DSM 6899 / JCM 31910 / BCRC 17059 / LMG 24140 / F1).